A 442-amino-acid polypeptide reads, in one-letter code: Exodeoxyribonuclease 7 large subunit (442 aa).

The tract at residues 1–38 is disordered; the sequence is MSDSTQFSLFDSGDDEPAKVTAPKRKVARKKRSSSSSD. Residues 22–33 are compositionally biased toward basic residues; the sequence is APKRKVARKKRS.

This sequence belongs to the XseA family. As to quaternary structure, heterooligomer composed of large and small subunits.

It localises to the cytoplasm. The catalysed reaction is Exonucleolytic cleavage in either 5'- to 3'- or 3'- to 5'-direction to yield nucleoside 5'-phosphates.. Its function is as follows. Bidirectionally degrades single-stranded DNA into large acid-insoluble oligonucleotides, which are then degraded further into small acid-soluble oligonucleotides. The sequence is that of Exodeoxyribonuclease 7 large subunit from Rhodopirellula baltica (strain DSM 10527 / NCIMB 13988 / SH1).